The following is a 141-amino-acid chain: Hemoglobin subunit alpha (141 aa).

In terms of domain architecture, Globin spans 1-141 (VLSPEDKNHV…VSTVLTSKYR (141 aa)). The residue at position 3 (Ser-3) is a Phosphoserine. Lys-7 carries the post-translational modification N6-succinyllysine. At Lys-16 the chain carries N6-acetyllysine; alternate. Lys-16 is subject to N6-succinyllysine; alternate. Tyr-24 bears the Phosphotyrosine mark. Ser-35 carries the phosphoserine modification. Position 40 is an N6-succinyllysine (Lys-40). At Ser-49 the chain carries Phosphoserine. His-58 contributes to the O2 binding site. His-87 lines the heme b pocket. Ser-102 is modified (phosphoserine). Thr-108 is subject to Phosphothreonine. 2 positions are modified to phosphoserine: Ser-124 and Ser-131. Thr-134 and Thr-137 each carry phosphothreonine. Ser-138 is modified (phosphoserine).

Belongs to the globin family. As to quaternary structure, heterotetramer of two alpha chains and two beta chains. Red blood cells.

In terms of biological role, involved in oxygen transport from the lung to the various peripheral tissues. Its function is as follows. Hemopressin acts as an antagonist peptide of the cannabinoid receptor CNR1. Hemopressin-binding efficiently blocks cannabinoid receptor CNR1 and subsequent signaling. The polypeptide is Hemoglobin subunit alpha (HBA) (Spalax ehrenbergi (Middle East blind mole rat)).